Consider the following 580-residue polypeptide: Alpha-glucosidase (580 aa).

The first 19 residues, 1–19, serve as a signal peptide directing secretion; that stretch reads MRPLGALSLFALLATTVSG. Residues Asn-102 and Asn-127 are each glycosylated (N-linked (GlcNAc...) asparagine). Catalysis depends on Asp-224, which acts as the Nucleophile. Glu-290 acts as the Proton donor in catalysis. Residue Asn-501 is glycosylated (N-linked (GlcNAc...) asparagine). A helical membrane pass occupies residues 560–580; sequence AAAINLSIGLLLAIMARYIFV.

The protein belongs to the glycosyl hydrolase 13 family. In terms of assembly, (Microbial infection) Binds to L.sphaericus BinB subunit of the binary toxin BinAB. As to expression, in 4th-instar larvae produced in the brush border membranes of the gastric caeca and the posterior stomach cells (at protein level).

Its subcellular location is the membrane. The catalysed reaction is Hydrolysis of terminal, non-reducing (1-&gt;4)-linked alpha-D-glucose residues with release of alpha-D-glucose.. Functionally, probably an alpha-glucosidase, it has no alpha-amylase function. (Microbial infection) Serves as the larval receptor for Lysinibacillus sphaericus BinB toxin. This Culex pipiens (House mosquito) protein is Alpha-glucosidase.